The following is an 86-amino-acid chain: U15-lycotoxin-Ls1d (86 aa).

An N-terminal signal peptide occupies residues 1 to 20 (MNSKIFAVLLLLALLSCVLS). A WAP domain is found at 21 to 66 (DQYCPKSSITACKKMNIRNDCCKDDDCTGGSWCCATPCGNFCKYPT). 5 disulfide bridges follow: cysteine 24-cysteine 54, cysteine 32-cysteine 58, cysteine 41-cysteine 53, cysteine 42-cysteine 80, and cysteine 47-cysteine 62.

The protein belongs to the venom protein 11 family. 01 (wap-1) subfamily. Post-translationally, contains 5 disulfide bonds. As to expression, expressed by the venom gland.

It localises to the secreted. Has antibacterial activity. The polypeptide is U15-lycotoxin-Ls1d (Lycosa singoriensis (Wolf spider)).